Here is a 243-residue protein sequence, read N- to C-terminus: Transmembrane protein 176A (243 aa).

Ser42 carries the phosphoserine modification. 4 helical membrane passes run 65 to 85 (WVVQ…LYIC), 92 to 112 (TQGA…VAFL), 122 to 142 (ALMR…AIVI), and 204 to 224 (LLGV…VYLW).

The protein belongs to the TMEM176 family. In terms of assembly, interacts with MCOLN2.

Its subcellular location is the membrane. In Rattus norvegicus (Rat), this protein is Transmembrane protein 176A (Tmem176a).